The following is a 334-amino-acid chain: Glycerol-1-phosphate dehydrogenase [NAD(P)+] (334 aa).

Residues 77–81 (GRPID) and 99–102 (TTAS) contribute to the NAD(+) site. Aspartate 104 provides a ligand contact to substrate. NAD(+) is bound at residue serine 108. Aspartate 147 lines the substrate pocket. Aspartate 147 and histidine 225 together coordinate Zn(2+). A substrate-binding site is contributed by histidine 229. Histidine 246 serves as a coordination point for Zn(2+).

It belongs to the glycerol-1-phosphate dehydrogenase family. Zn(2+) is required as a cofactor.

It is found in the cytoplasm. It catalyses the reaction sn-glycerol 1-phosphate + NAD(+) = dihydroxyacetone phosphate + NADH + H(+). The enzyme catalyses sn-glycerol 1-phosphate + NADP(+) = dihydroxyacetone phosphate + NADPH + H(+). It functions in the pathway membrane lipid metabolism; glycerophospholipid metabolism. In terms of biological role, catalyzes the NAD(P)H-dependent reduction of dihydroxyacetonephosphate (DHAP or glycerone phosphate) to glycerol 1-phosphate (G1P). The G1P thus generated is used as the glycerophosphate backbone of phospholipids in the cellular membranes of Archaea. The chain is Glycerol-1-phosphate dehydrogenase [NAD(P)+] from Methanococcus maripaludis (strain C5 / ATCC BAA-1333).